The following is a 343-amino-acid chain: Nicotianamine synthase 3 (343 aa).

It belongs to the nicotianamine synthase (NAS)-like family. As to expression, expressed in leaves.

The catalysed reaction is 3 S-adenosyl-L-methionine = nicotianamine + 3 S-methyl-5'-thioadenosine + 3 H(+). Its function is as follows. Synthesizes nicotianamine, a polyamine that is the first intermediate in the synthesis of the phytosiderophores of the mugineic acid type found in gramineae which serve as a sensor for the physiological iron status within the plant, and/or might be involved in the transport of iron. The sequence is that of Nicotianamine synthase 3 (NAS3) from Oryza sativa subsp. indica (Rice).